Here is a 281-residue protein sequence, read N- to C-terminus: 1-acyl-sn-glycerol-3-phosphate acyltransferase (281 aa).

A run of 3 helical transmembrane segments spans residues 40–60 (IFVCFAIVLITAVAWGLIMVL), 71–91 (LGNLYGHIIGGLVIWIYGIPI), and 110–130 (ASPIDAFFVMWLAPIGTVGVA). Positions 109–114 (HASPID) match the HXXXXD motif motif.

Belongs to the 1-acyl-sn-glycerol-3-phosphate acyltransferase family.

Its subcellular location is the membrane. The enzyme catalyses a 1-acyl-sn-glycero-3-phosphate + an acyl-CoA = a 1,2-diacyl-sn-glycero-3-phosphate + CoA. The protein operates within phospholipid metabolism; CDP-diacylglycerol biosynthesis; CDP-diacylglycerol from sn-glycerol 3-phosphate: step 2/3. Converts lysophosphatidic acid (LPA) into phosphatidic acid by incorporating acyl moiety at the 2 position. This enzyme uses erucoyl-CoA as an acyl donor. This is 1-acyl-sn-glycerol-3-phosphate acyltransferase (PLSC) from Limnanthes douglasii (Douglas' meadowfoam).